The following is a 241-amino-acid chain: L-aspartate dehydrogenase (241 aa).

NAD(+) contacts are provided by alanine 109 and asparagine 164. Histidine 193 is an active-site residue.

This sequence belongs to the L-aspartate dehydrogenase family.

It catalyses the reaction L-aspartate + NADP(+) + H2O = oxaloacetate + NH4(+) + NADPH + H(+). The enzyme catalyses L-aspartate + NAD(+) + H2O = oxaloacetate + NH4(+) + NADH + H(+). The protein operates within cofactor biosynthesis; NAD(+) biosynthesis; iminoaspartate from L-aspartate (dehydrogenase route): step 1/1. Specifically catalyzes the NAD or NADP-dependent dehydrogenation of L-aspartate to iminoaspartate. The sequence is that of L-aspartate dehydrogenase from Thermotoga sp. (strain RQ2).